A 210-amino-acid chain; its full sequence is 3-hexulose-6-phosphate synthase (210 aa).

This sequence belongs to the HPS/KGPDC family. HPS subfamily.

The enzyme catalyses D-ribulose 5-phosphate + formaldehyde = D-arabino-hex-3-ulose 6-phosphate. It participates in one-carbon metabolism; formaldehyde assimilation via RuMP pathway; D-fructose 6-phosphate from D-ribulose 5-phosphate and formaldehyde: step 1/2. In terms of biological role, catalyzes the condensation of ribulose 5-phosphate with formaldehyde to form 3-hexulose 6-phosphate. The protein is 3-hexulose-6-phosphate synthase of Staphylococcus aureus (strain USA300).